Reading from the N-terminus, the 184-residue chain is MSRLGFGERVRACVLTGDQISRSLRRISHEILERNASSLEELALVGILTRGVPLAHRIAGNIRRFEGLEVPVGALDITLHRDDLDGEDPEVKGSHIPFEVAGRTVVMVDDVLFTGRTARAAMDALLERGRPAAIQLAVLVDRGHRELPIRADYVGKNIPTSLGESVRVGLVETDGEDGVVVVGS.

The short motif at Val-105–Thr-117 is the PRPP-binding element.

Belongs to the purine/pyrimidine phosphoribosyltransferase family. PyrR subfamily.

It carries out the reaction UMP + diphosphate = 5-phospho-alpha-D-ribose 1-diphosphate + uracil. Regulates the transcription of the pyrimidine nucleotide (pyr) operon in response to exogenous pyrimidines. Its function is as follows. Also displays a weak uracil phosphoribosyltransferase activity which is not physiologically significant. The chain is Bifunctional protein PyrR from Rubrobacter xylanophilus (strain DSM 9941 / JCM 11954 / NBRC 16129 / PRD-1).